The following is a 216-amino-acid chain: Nucleoside triphosphate pyrophosphatase (216 aa).

Aspartate 82 (proton acceptor) is an active-site residue.

It belongs to the Maf family. A divalent metal cation is required as a cofactor.

It is found in the cytoplasm. It catalyses the reaction a ribonucleoside 5'-triphosphate + H2O = a ribonucleoside 5'-phosphate + diphosphate + H(+). The catalysed reaction is a 2'-deoxyribonucleoside 5'-triphosphate + H2O = a 2'-deoxyribonucleoside 5'-phosphate + diphosphate + H(+). In terms of biological role, nucleoside triphosphate pyrophosphatase. May have a dual role in cell division arrest and in preventing the incorporation of modified nucleotides into cellular nucleic acids. The protein is Nucleoside triphosphate pyrophosphatase of Mycobacterium marinum (strain ATCC BAA-535 / M).